Reading from the N-terminus, the 75-residue chain is DNA-directed RNA polymerase subunit omega (75 aa).

It belongs to the RNA polymerase subunit omega family. As to quaternary structure, in cyanobacteria the RNAP catalytic core is composed of 2 alpha, 1 beta, 1 beta', 1 gamma and 1 omega subunit. When a sigma factor is associated with the core the holoenzyme is formed, which can initiate transcription.

The enzyme catalyses RNA(n) + a ribonucleoside 5'-triphosphate = RNA(n+1) + diphosphate. Its function is as follows. Promotes RNA polymerase assembly. Latches the N- and C-terminal regions of the beta' subunit thereby facilitating its interaction with the beta and alpha subunits. The sequence is that of DNA-directed RNA polymerase subunit omega from Cyanothece sp. (strain PCC 7425 / ATCC 29141).